A 91-amino-acid chain; its full sequence is UPF0250 protein HCH_05838 (91 aa).

Belongs to the UPF0250 family.

The protein is UPF0250 protein HCH_05838 of Hahella chejuensis (strain KCTC 2396).